Reading from the N-terminus, the 150-residue chain is MASAKIFLIFLLAALIATPAAFAILVPTLVSTHISGLVFCSVNGNLDVINGLSPQVFPNASVQLRCGATNVISSTITNGSGAFSLAVNTFPLLNCNLVVATPLSTCNATLQSVGRLASSLRLVNITLGSGTGLIRVGLAPTGFILNLNIN.

Residues 1 to 23 (MASAKIFLIFLLAALIATPAAFA) form the signal peptide.

In terms of processing, probably covalently linked to cuticular lipids and/or trichome exudate diterpens or sugar esters in order to increase the solubility in exudate and the dispersion on the leaf surface. In terms of tissue distribution, expressed in small glandular secreting trichomes (SGTs).

It localises to the secreted. Its function is as follows. Inhibits spore germination and leaf infection by fungal pathogens. The protein is Phylloplanin of Nicotiana tabacum (Common tobacco).